Reading from the N-terminus, the 245-residue chain is Ribonuclease PH (245 aa).

Phosphate contacts are provided by residues R86 and 124–126; that span reads GTR.

It belongs to the RNase PH family. In terms of assembly, homohexameric ring arranged as a trimer of dimers.

It carries out the reaction tRNA(n+1) + phosphate = tRNA(n) + a ribonucleoside 5'-diphosphate. Functionally, phosphorolytic 3'-5' exoribonuclease that plays an important role in tRNA 3'-end maturation. Removes nucleotide residues following the 3'-CCA terminus of tRNAs; can also add nucleotides to the ends of RNA molecules by using nucleoside diphosphates as substrates, but this may not be physiologically important. Probably plays a role in initiation of 16S rRNA degradation (leading to ribosome degradation) during starvation. This is Ribonuclease PH from Bacillus cytotoxicus (strain DSM 22905 / CIP 110041 / 391-98 / NVH 391-98).